Here is a 422-residue protein sequence, read N- to C-terminus: Serine/threonine-protein kinase H1 homolog (422 aa).

Positions 35-80 are disordered; that stretch reads FIKYDGGGEKTGSPSPQGQSQAVAKVSQSPPPANDQPEPADSHRKK. The span at 46–62 shows a compositional bias: polar residues; it reads GSPSPQGQSQAVAKVSQ. One can recognise a Protein kinase domain in the interval 96-353; sequence YDIKALIGRG…AGQALKHPWI (258 aa). Residues 102 to 110 and Lys125 each bind ATP; that span reads IGRGSFSRV. Asp216 functions as the Proton acceptor in the catalytic mechanism. Residues 376–422 form a disordered region; the sequence is RASSRCHSTKSSQSTRSSRSTKSSKARRLREKELRELNRRYQQQCNG. The span at 384–396 shows a compositional bias: low complexity; the sequence is TKSSQSTRSSRST. Over residues 405–414 the composition is skewed to basic and acidic residues; the sequence is REKELRELNR.

The protein belongs to the protein kinase superfamily. CAMK Ser/Thr protein kinase family.

The enzyme catalyses L-seryl-[protein] + ATP = O-phospho-L-seryl-[protein] + ADP + H(+). The catalysed reaction is L-threonyl-[protein] + ATP = O-phospho-L-threonyl-[protein] + ADP + H(+). The polypeptide is Serine/threonine-protein kinase H1 homolog (pskh1) (Danio rerio (Zebrafish)).